We begin with the raw amino-acid sequence, 234 residues long: Putative B3 domain-containing protein At2g18810 (234 aa).

Residues 55–88 (CKNQDPEQNPNRVASSPSLCHVKSKRPQKGVSNK) form a disordered region. A compositionally biased stretch (polar residues) spans 60-72 (PEQNPNRVASSPS). Residues 87-185 (NKPILDMDFL…MLFFALVLSD (99 aa)) constitute a DNA-binding region (TF-B3).

Its subcellular location is the nucleus. In Arabidopsis thaliana (Mouse-ear cress), this protein is Putative B3 domain-containing protein At2g18810.